The chain runs to 383 residues: MRGLSQRVKSMKPSATVAVNARALELRRKGVDLVALTAGEPDFDTPEHVKEAGRRALAQGKTKYAPPAGIPELREAVAEKFRRENGLEVTPEETIVTVGGKQALFNLFQAILDPGDEVIVLAPYWVSYPEMVRFAGGVPVEVPTLPEEGFVPDPERVRRAITPRTKALVVNSPNNPTGVVYPEEVLRALAEMALQHDFYLVSDEIYEHLIYEGAHFSPGTLAPEHTITVNGAAKAFAMTGWRIGYACGPKAVIKAMADVSSQSTTSPDTIAQWATLEALTNREASMAFIAMAREAYRKRRDLLLEGLSRIGLEAVRPSGAFYVLMDTSPFAPNEVEAAERLLMAGVAVVPGTEFAAFGHVRLSYATGEENLKKALERFAQALQ.

The L-aspartate site is built by Gly-39, Trp-125, and Asn-175. N6-(pyridoxal phosphate)lysine is present on Lys-234. Arg-361 serves as a coordination point for L-aspartate.

It belongs to the class-I pyridoxal-phosphate-dependent aminotransferase family. As to quaternary structure, homodimer. Pyridoxal 5'-phosphate serves as cofactor.

Its subcellular location is the cytoplasm. It carries out the reaction L-aspartate + 2-oxoglutarate = oxaloacetate + L-glutamate. The catalysed reaction is L-arogenate + oxaloacetate = prephenate + L-aspartate. Its function is as follows. Catalyzes the reversible conversion of aspartate and 2-oxoglutarate to glutamate and oxaloacetate. Can also transaminate prephenate in the presence of aspartate. This chain is Probable aspartate/prephenate aminotransferase (aspC), found in Thermus aquaticus.